A 424-amino-acid chain; its full sequence is Serine--tRNA ligase (424 aa).

233 to 235 contacts L-serine; sequence TAE. 264–266 is a binding site for ATP; it reads RKE. Glu287 contributes to the L-serine binding site. Residue 351-354 participates in ATP binding; it reads EISS. Ser386 is an L-serine binding site.

This sequence belongs to the class-II aminoacyl-tRNA synthetase family. Type-1 seryl-tRNA synthetase subfamily. As to quaternary structure, homodimer. The tRNA molecule binds across the dimer.

It localises to the cytoplasm. The catalysed reaction is tRNA(Ser) + L-serine + ATP = L-seryl-tRNA(Ser) + AMP + diphosphate + H(+). It carries out the reaction tRNA(Sec) + L-serine + ATP = L-seryl-tRNA(Sec) + AMP + diphosphate + H(+). It functions in the pathway aminoacyl-tRNA biosynthesis; selenocysteinyl-tRNA(Sec) biosynthesis; L-seryl-tRNA(Sec) from L-serine and tRNA(Sec): step 1/1. Functionally, catalyzes the attachment of serine to tRNA(Ser). Is also able to aminoacylate tRNA(Sec) with serine, to form the misacylated tRNA L-seryl-tRNA(Sec), which will be further converted into selenocysteinyl-tRNA(Sec). The polypeptide is Serine--tRNA ligase (Elusimicrobium minutum (strain Pei191)).